The primary structure comprises 316 residues: DNA-directed RNA polymerase subunit alpha (316 aa).

The tract at residues 1–230 (MIEFEKPNIH…EHLAMFVDLT (230 aa)) is alpha N-terminal domain (alpha-NTD). An alpha C-terminal domain (alpha-CTD) region spans residues 247–316 (KEKMLEMTIE…DLGLSLRKED (70 aa)).

It belongs to the RNA polymerase alpha chain family. Homodimer. The RNAP catalytic core consists of 2 alpha, 1 beta, 1 beta' and 1 omega subunit. When a sigma factor is associated with the core the holoenzyme is formed, which can initiate transcription.

The enzyme catalyses RNA(n) + a ribonucleoside 5'-triphosphate = RNA(n+1) + diphosphate. DNA-dependent RNA polymerase catalyzes the transcription of DNA into RNA using the four ribonucleoside triphosphates as substrates. This chain is DNA-directed RNA polymerase subunit alpha, found in Levilactobacillus brevis (strain ATCC 367 / BCRC 12310 / CIP 105137 / JCM 1170 / LMG 11437 / NCIMB 947 / NCTC 947) (Lactobacillus brevis).